The sequence spans 152 residues: Ribosomal RNA large subunit methyltransferase H (152 aa).

S-adenosyl-L-methionine contacts are provided by residues Leu69, Gly96, and 118–123 (FGKLTF).

This sequence belongs to the RNA methyltransferase RlmH family. Homodimer.

Its subcellular location is the cytoplasm. It catalyses the reaction pseudouridine(1915) in 23S rRNA + S-adenosyl-L-methionine = N(3)-methylpseudouridine(1915) in 23S rRNA + S-adenosyl-L-homocysteine + H(+). In terms of biological role, specifically methylates the pseudouridine at position 1915 (m3Psi1915) in 23S rRNA. The sequence is that of Ribosomal RNA large subunit methyltransferase H from Mesomycoplasma hyopneumoniae (strain 232) (Mycoplasma hyopneumoniae).